We begin with the raw amino-acid sequence, 154 residues long: Ribosomal RNA large subunit methyltransferase H (154 aa).

Residues L71 and G103 each coordinate S-adenosyl-L-methionine.

It belongs to the RNA methyltransferase RlmH family. Homodimer.

It localises to the cytoplasm. The enzyme catalyses pseudouridine(1915) in 23S rRNA + S-adenosyl-L-methionine = N(3)-methylpseudouridine(1915) in 23S rRNA + S-adenosyl-L-homocysteine + H(+). In terms of biological role, specifically methylates the pseudouridine at position 1915 (m3Psi1915) in 23S rRNA. This Solidesulfovibrio magneticus (strain ATCC 700980 / DSM 13731 / RS-1) (Desulfovibrio magneticus) protein is Ribosomal RNA large subunit methyltransferase H.